The following is a 253-amino-acid chain: Blue-light photoreceptor (253 aa).

The region spanning 6 to 79 (QFDVILKALN…AKIRHAINEK (74 aa)) is the PAS domain. S-4a-FMN cysteine is present on C56. Residues 80–133 (STANVLLKNYRKDGTSFMNELTIEPIYDDHEHLYFVGIQKDVTTEHDYQLELEK) form the PAC domain. An STAS domain is found at 142–253 (STPIVPIKEN…STIKEALQFY (112 aa)).

Post-translationally, FMN binds covalently to cysteine after exposure to blue light and this bond is spontaneously broken in the dark.

Its function is as follows. Exhibits the same spectroscopical features and blue-light induced photochemistry as plants phototropins, with the reversible formation of a blue-shifted photoproduct, assigned to an FMN-cysteine thiol adduct. Positive regulator in the activation of the general stress transcription factor sigma-B. The protein is Blue-light photoreceptor of Listeria monocytogenes serovar 1/2a (strain ATCC BAA-679 / EGD-e).